The primary structure comprises 118 residues: DNA mimic protein DMP12 (118 aa).

The protein belongs to the DMP12-like protein family. Monomer. Interacts with the dimeric form of the DNA-binding protein HU.

In terms of biological role, acts as a DNA mimic. Interacts with the DNA-binding protein HU and partially prevents the binding of HU protein to DNA by occupying the DNA binding sites on the protein. However, the relatively weak affinity of DMP12 for HU suggests that it may not completely block the HU protein-DNA binding, and that DMP12 is more likely to act as a regulator than a competitive inhibitor. It protects HU protein from limited digestion by trypsin in a limited trypsin digestion assay, suggesting that it may serve to protect the HU protein and improve the stability of unbound HU protein. This chain is DNA mimic protein DMP12, found in Neisseria meningitidis serogroup B (strain ATCC BAA-335 / MC58).